Consider the following 224-residue polypeptide: (S)-2-haloacid dehalogenase H-109 (224 aa).

D10 acts as the Nucleophile in catalysis. Residues 11 to 12 (LY), R41, and 118 to 119 (SN) each bind an (S)-2-haloacid. Positions 175-180 (SSNSWD) are important for catalytic activity.

Belongs to the HAD-like hydrolase superfamily. S-2-haloalkanoic acid dehalogenase family.

It catalyses the reaction an (S)-2-haloacid + H2O = a (2R)-2-hydroxycarboxylate + a halide anion + H(+). It carries out the reaction (S)-2-chloropropanoate + H2O = (R)-lactate + chloride + H(+). Its function is as follows. Catalyzes the hydrolytic dehalogenation of small (S)-2-haloalkanoic acids to yield the corresponding (R)-2-hydroxyalkanoic acids. Acts on acids of short chain lengths, C(2) to C(4), with inversion of configuration at C-2. Active with 2-halogenated carboxylic acids and converts only the S-isomer (or L-isomer) of 2-chloropropionic acid with inversion of configuration to produce R-lactate (or D-isomer). In Pseudomonas putida (Arthrobacter siderocapsulatus), this protein is (S)-2-haloacid dehalogenase H-109.